Consider the following 905-residue polypeptide: DNA mismatch repair protein MutS (905 aa).

The interval 389-410 (ERPANPEGTYPTDAETSGDTLP) is disordered. 638 to 645 (GPNMAGKS) is an ATP binding site. Residues 826 to 847 (RDAARGTNSAPSRQTLPGLDLP) form a disordered region. A compositionally biased stretch (polar residues) spans 831–840 (GTNSAPSRQT).

It belongs to the DNA mismatch repair MutS family.

In terms of biological role, this protein is involved in the repair of mismatches in DNA. It is possible that it carries out the mismatch recognition step. This protein has a weak ATPase activity. The chain is DNA mismatch repair protein MutS from Nitratidesulfovibrio vulgaris (strain ATCC 29579 / DSM 644 / CCUG 34227 / NCIMB 8303 / VKM B-1760 / Hildenborough) (Desulfovibrio vulgaris).